The sequence spans 337 residues: Anthranilate phosphoribosyltransferase (337 aa).

Residues G81, 84–85, S89, 91–94, 109–117, and A121 each bind 5-phospho-alpha-D-ribose 1-diphosphate; these read GD, NVST, and KHGNRAASS. G81 is an anthranilate binding site. S93 provides a ligand contact to Mg(2+). N112 provides a ligand contact to anthranilate. Position 167 (R167) interacts with anthranilate. The Mg(2+) site is built by D226 and E227.

It belongs to the anthranilate phosphoribosyltransferase family. In terms of assembly, homodimer. It depends on Mg(2+) as a cofactor.

The catalysed reaction is N-(5-phospho-beta-D-ribosyl)anthranilate + diphosphate = 5-phospho-alpha-D-ribose 1-diphosphate + anthranilate. Its pathway is amino-acid biosynthesis; L-tryptophan biosynthesis; L-tryptophan from chorismate: step 2/5. Functionally, catalyzes the transfer of the phosphoribosyl group of 5-phosphorylribose-1-pyrophosphate (PRPP) to anthranilate to yield N-(5'-phosphoribosyl)-anthranilate (PRA). The protein is Anthranilate phosphoribosyltransferase of Methylobacterium nodulans (strain LMG 21967 / CNCM I-2342 / ORS 2060).